A 180-amino-acid polypeptide reads, in one-letter code: Fanconi anemia core complex-associated protein 20 (180 aa).

The span at 1 to 17 (MEAARRPRLGLSRRRPR) shows a compositional bias: basic residues. 2 disordered regions span residues 1–28 (MEAA…GRPW) and 106–135 (GAGG…VEQQ). 2 positions are modified to phosphoserine: Ser-113 and Ser-137. The UBZ2-type zinc-finger motif lies at 144-180 (LRSCPMCQKEFAPRLTQLDVDSHLAQCLAESTEDVTW). Residues Cys-147, Cys-150, His-166, and Cys-170 each coordinate Zn(2+).

Component of the Fanconi anemia (FA) complex. Interacts with FANCA; interaction is direct. Interacts with REV1. Reported to bind monoubiquitinated REV1; however it binds better to non-ubiquitinated REV1.

It is found in the nucleus. The protein localises to the chromosome. Component of the Fanconi anemia (FA) complex required to recruit the FA complex to DNA interstrand cross-links (ICLs) and promote ICLs repair. Following DNA damage recognizes and binds 'Lys-63'-linked ubiquitin generated by RNF8 at ICLs and recruits other components of the FA complex. Promotes translesion synthesis via interaction with REV1. In Homo sapiens (Human), this protein is Fanconi anemia core complex-associated protein 20.